The chain runs to 143 residues: MYENKMNLEFVSKSQNEAFARVAVAAFIAQLDPTIDEISDVKTAVSEAVTNSIIHGYENKEDGIIKIEVEICDGEVTIEITDNGKGIEDIPKVMEPLYTSRPDLERSGMGFTVMETFMDGLLVESEKEKGTRVRMKKKFNILS.

Belongs to the anti-sigma-factor family.

The catalysed reaction is L-seryl-[protein] + ATP = O-phospho-L-seryl-[protein] + ADP + H(+). It carries out the reaction L-threonyl-[protein] + ATP = O-phospho-L-threonyl-[protein] + ADP + H(+). In terms of biological role, binds to sigma F and blocks its ability to form an RNA polymerase holoenzyme (E-sigma F). Phosphorylates SpoIIAA on a serine residue. This phosphorylation may enable SpoIIAA to act as an anti-anti-sigma factor that counteracts SpoIIAB and thus releases sigma F from inhibition. The protein is Anti-sigma F factor of Clostridium botulinum (strain Alaska E43 / Type E3).